The chain runs to 480 residues: Uridine/deoxyuridine transporter (480 aa).

A run of 14 helical transmembrane segments spans residues 14-34 (VGSI…FQLN), 55-75 (SIAL…LFLP), 93-113 (LTMI…LMIG), 115-135 (ILQG…HVKV), 147-167 (ILTS…GWLV), 174-194 (SVFF…SFGT), 207-227 (WTGV…VNAL), 239-259 (WLLA…FWQV), 280-300 (GLLI…NGII), 320-340 (LVTL…SGFL), 358-378 (IIGI…LLLL), 382-402 (FIGI…GIVL), 417-437 (GMFN…PTVL), and 449-469 (ISGI…SFLI).

Belongs to the major facilitator superfamily. EmrB family.

The protein resides in the cell membrane. Its function is as follows. Responsible for the uptake of uridine and deoxyuridine. Not involved in purine nucleoside uptake. This chain is Uridine/deoxyuridine transporter, found in Lactococcus lactis subsp. cremoris (strain MG1363).